The sequence spans 376 residues: MAARFSIQPIGRFAGESQPVKRPKEFACFSYDDNHEFRLDGSSLKYYYTPQLGADLSKGFDTFQKLDDTGDDHLDSLLKTIVAHEQETGKKIDANVVTWRGMMTKIMATPFDNMDGFEMNATLYQVCPSFIEENNAYKVASRSNEGNNNRRRRGPPLEVMQFWGYKFETLSTLPAPWAETPREFIENRENEVVNNKAQYCSVVRTGIGKSVLCLGGEVDAIWDSKPEEKGSPINWVELKTSAEIRNTGDMENFNRKLMKYWIQSFLLGVPRIVVGFRTRDGILVEAKDIETHRIPETVNSYPNPKWNADMCVNFAATFLDWLSANITDEGVWRIKREPQSPTIELFKVEETGHGDILSDEFKNWRIKLALGPSNES.

Glu168 contacts a divalent metal cation. Residues Cys200 and Glu217 each contribute to the substrate site. Positions 219, 237, and 238 each coordinate a divalent metal cation. Lys239 and Gln263 together coordinate substrate.

Belongs to the DXO/Dom3Z family. Interacts with RAT1; the interaction is direct, stabilizes RAT1 protein structure and stimulates its exoribonuclease activity. The interaction also stimulates RAI1 pyrophosphohydrolase activity, probably by recruiting it to mRNA substrates. Requires a divalent metal cation as cofactor.

It localises to the nucleus. It carries out the reaction a 5'-end NAD(+)-phospho-ribonucleoside in mRNA + H2O = a 5'-end phospho-ribonucleoside in mRNA + NAD(+) + H(+). The catalysed reaction is a 5'-end (N(7)-methyl 5'-triphosphoguanosine)-ribonucleoside-ribonucleotide in mRNA + H2O = a (N(7)-methyl 5'-triphosphoguanosine)-nucleoside + a 5'-end phospho-ribonucleoside in mRNA + H(+). The enzyme catalyses a 5'-end triphospho-ribonucleoside in mRNA + H2O = a 5'-end phospho-ribonucleoside in mRNA + diphosphate + H(+). Its function is as follows. Decapping enzyme for NAD-capped RNAs: specifically hydrolyzes the nicotinamide adenine dinucleotide (NAD) cap from a subset of RNAs by removing the entire NAD moiety from the 5'-end of an NAD-capped RNA. The NAD-cap is present at the 5'-end of some RNAs and snoRNAs. In contrast to the canonical 5'-end N7 methylguanosine (m7G) cap, the NAD cap promotes mRNA decay. Also acts as a non-canonical decapping enzyme that removes the entire cap structure of m7G capped or incompletely capped RNAs. Has decapping activity toward incomplete 5'-end m7G cap mRNAs such as unmethylated 5'-end-capped RNA (cap0), while it has no activity toward 2'-O-ribose methylated m7G cap (cap1). Also possesses RNA 5'-pyrophosphohydrolase activity by hydrolyzing the 5'-end triphosphate to release pyrophosphates. Stimulates exoribonuclease activity of Rat1, allowing it to degrade RNAs with stable secondary structure more effectively. The protein is Decapping nuclease RAI1 (RAI1) of Gibberella zeae (strain ATCC MYA-4620 / CBS 123657 / FGSC 9075 / NRRL 31084 / PH-1) (Wheat head blight fungus).